Consider the following 512-residue polypeptide: Histidine ammonia-lyase (512 aa).

The segment at residues 142–144 (ASG) is a cross-link (5-imidazolinone (Ala-Gly)). At Ser-143 the chain carries 2,3-didehydroalanine (Ser).

Belongs to the PAL/histidase family. Contains an active site 4-methylidene-imidazol-5-one (MIO), which is formed autocatalytically by cyclization and dehydration of residues Ala-Ser-Gly.

The protein localises to the cytoplasm. The enzyme catalyses L-histidine = trans-urocanate + NH4(+). Its pathway is amino-acid degradation; L-histidine degradation into L-glutamate; N-formimidoyl-L-glutamate from L-histidine: step 1/3. This chain is Histidine ammonia-lyase, found in Bartonella tribocorum (strain CIP 105476 / IBS 506).